The chain runs to 121 residues: Small ribosomal subunit protein uS13 (121 aa).

The disordered stretch occupies residues 94–121; it reads GLPVRGQNTKNNARTRKGKAVAIAGKKK. Residues 106 to 121 are compositionally biased toward basic residues; it reads ARTRKGKAVAIAGKKK.

Belongs to the universal ribosomal protein uS13 family. Part of the 30S ribosomal subunit. Forms a loose heterodimer with protein S19. Forms two bridges to the 50S subunit in the 70S ribosome.

Functionally, located at the top of the head of the 30S subunit, it contacts several helices of the 16S rRNA. In the 70S ribosome it contacts the 23S rRNA (bridge B1a) and protein L5 of the 50S subunit (bridge B1b), connecting the 2 subunits; these bridges are implicated in subunit movement. Contacts the tRNAs in the A and P-sites. This is Small ribosomal subunit protein uS13 from Streptococcus sanguinis (strain SK36).